The following is a 100-amino-acid chain: uncharacterized protein (100 aa).

The disordered stretch occupies residues 78–100 (KPYRTESGTSSSNRMMLPPRQHV).

This is an uncharacterized protein from Caenorhabditis elegans.